The chain runs to 155 residues: NADPH-dependent 7-cyano-7-deazaguanine reductase (155 aa).

The active-site Thioimide intermediate is the Cys53. Asp60 acts as the Proton donor in catalysis. Substrate-binding positions include 75-77 and 94-95; these read VES and HE.

The protein belongs to the GTP cyclohydrolase I family. QueF type 1 subfamily.

The protein resides in the cytoplasm. The catalysed reaction is 7-aminomethyl-7-carbaguanine + 2 NADP(+) = 7-cyano-7-deazaguanine + 2 NADPH + 3 H(+). It participates in tRNA modification; tRNA-queuosine biosynthesis. Catalyzes the NADPH-dependent reduction of 7-cyano-7-deazaguanine (preQ0) to 7-aminomethyl-7-deazaguanine (preQ1). This chain is NADPH-dependent 7-cyano-7-deazaguanine reductase, found in Brucella abortus (strain S19).